The sequence spans 477 residues: Proline--tRNA ligase (477 aa).

Threonine 111, glutamate 113, and arginine 142 together coordinate L-proline. Residues arginine 142, threonine 153, glutamine 225, and threonine 228 each coordinate ATP. Histidine 230 contributes to the L-proline binding site. The ATP site is built by serine 262 and arginine 264. The tract at residues 340-369 (ELKGVPFRVELGPKDLEGGQAVLASRLGGK) is interaction with tRNA. Zn(2+) is bound by residues cysteine 427, cysteine 432, cysteine 458, and cysteine 461.

The protein belongs to the class-II aminoacyl-tRNA synthetase family. ProS type 3 subfamily. In terms of assembly, homodimer. Only one tRNA molecule binds per dimer.

It is found in the cytoplasm. It carries out the reaction tRNA(Pro) + L-proline + ATP = L-prolyl-tRNA(Pro) + AMP + diphosphate. In terms of biological role, catalyzes the attachment of proline to tRNA(Pro) in a two-step reaction: proline is first activated by ATP to form Pro-AMP and then transferred to the acceptor end of tRNA(Pro). Can inadvertently accommodate and process cysteine. This Thermus thermophilus (strain ATCC 27634 / DSM 579 / HB8) protein is Proline--tRNA ligase (proS).